Consider the following 659-residue polypeptide: MFQNNPLLAQLKQQIEASKEYVEGVVKTSDKSYGFLECEKNSYFIPPAEMKKVMHGDKVKAVVKRDGDKEQVEIDSLLEPMLERFIAQVRFNKDGKLQLAVDHPSINNFIPANTQKKVTEPLENGDWVVAQLKTHPLRDDRFFFAQVTQFICKADDNFAPWWVTLARHEQPREPVANEKSYELQDQVEREDLTHLYFTTIDSASTKDMDDALYVEPISENGTQTGWRLVVAIADPTAYIPEQSAIEKAARQRCFTNYLPGFNIPMLPRELSDDLCSLVPNEKRPALVGYIETDLSGNVVGEARFVSAWVQSKARLVYDEVSDYLEKVENHWTPDCAETAQQIDWLHQFTLARIDWRSKNALLFKEQGDYSFELAEDGAVKAIHIDYRRIANQMIEEAMIIANICAAQFLDKYAHTGVFNTHSGFDSKNLEPARKFLLDTLANDENRESLSERYSPERLSTLEGYCEMRRDIEQFPENFLEMRLRRYLTFAEFKATSAPHLGLGISHYATWTSPIRKYGDMVNHRLIKQVLSNQTAKPVEETVLARLQEARKQNRMVERDIADWLYARYLEPMVEQNVEFDGEIQDVSRGGLRVKVIENGASVFVPFSTLHNNKEEMLFSPEEIALYIKGEKAYQIGQAVKVKLKEVRVETRSVVGDVLI.

An RNB domain is found at 189 to 532 (REDLTHLYFT…HRLIKQVLSN (344 aa)). One can recognise an S1 motif domain in the interval 576 to 658 (NVEFDGEIQD…ETRSVVGDVL (83 aa)).

The protein belongs to the RNR ribonuclease family. RNase II subfamily.

The protein localises to the cytoplasm. The enzyme catalyses Exonucleolytic cleavage in the 3'- to 5'-direction to yield nucleoside 5'-phosphates.. Involved in mRNA degradation. Hydrolyzes single-stranded polyribonucleotides processively in the 3' to 5' direction. The chain is Exoribonuclease 2 from Glaesserella parasuis serovar 5 (strain SH0165) (Haemophilus parasuis).